The sequence spans 144 residues: Large ribosomal subunit protein uL15 (144 aa).

Positions 1–48 (MIKLECLQDPSPRKRRTKLLGRGPSSGHGKTSGRGHKGDGSRSGYKRR) are disordered.

Belongs to the universal ribosomal protein uL15 family. As to quaternary structure, part of the 50S ribosomal subunit.

Binds to the 23S rRNA. This chain is Large ribosomal subunit protein uL15, found in Chlamydia trachomatis serovar L2 (strain ATCC VR-902B / DSM 19102 / 434/Bu).